An 88-amino-acid chain; its full sequence is ATP synthase F(0) complex subunit f, mitochondrial (88 aa).

Position 2 is an N-acetylalanine (Ala2). Phosphoserine is present on Ser3. Lys16 carries the N6-acetyllysine modification. The chain crosses the membrane as a helical span at residues Met62 to Leu79.

The protein belongs to the ATPase F chain family. As to quaternary structure, component of the ATP synthase complex composed at least of ATP5F1A/subunit alpha, ATP5F1B/subunit beta, ATP5MC1/subunit c (homooctomer), MT-ATP6/subunit a, MT-ATP8/subunit 8, ATP5ME/subunit e, ATP5MF/subunit f, ATP5MG/subunit g, ATP5MK/subunit k, ATP5MJ/subunit j, ATP5F1C/subunit gamma, ATP5F1D/subunit delta, ATP5F1E/subunit epsilon, ATP5PF/subunit F6, ATP5PB/subunit b, ATP5PD/subunit d, ATP5PO/subunit OSCP. ATP synthase complex consists of a soluble F(1) head domain (subunits alpha(3) and beta(3)) - the catalytic core - and a membrane F(0) domain - the membrane proton channel (subunits c, a, 8, e, f, g, k and j). These two domains are linked by a central stalk (subunits gamma, delta, and epsilon) rotating inside the F1 region and a stationary peripheral stalk (subunits F6, b, d, and OSCP).

It is found in the mitochondrion. The protein localises to the mitochondrion inner membrane. Its function is as follows. Subunit f, of the mitochondrial membrane ATP synthase complex (F(1)F(0) ATP synthase or Complex V) that produces ATP from ADP in the presence of a proton gradient across the membrane which is generated by electron transport complexes of the respiratory chain. ATP synthase complex consist of a soluble F(1) head domain - the catalytic core - and a membrane F(1) domain - the membrane proton channel. These two domains are linked by a central stalk rotating inside the F(1) region and a stationary peripheral stalk. During catalysis, ATP synthesis in the catalytic domain of F(1) is coupled via a rotary mechanism of the central stalk subunits to proton translocation. In vivo, can only synthesize ATP although its ATP hydrolase activity can be activated artificially in vitro. Part of the complex F(0) domain. The protein is ATP synthase F(0) complex subunit f, mitochondrial of Rattus norvegicus (Rat).